The chain runs to 231 residues: Ureidoacrylate amidohydrolase RutB (231 aa).

Residue D25 is the Proton acceptor of the active site. K134 is a catalytic residue. The active-site Nucleophile is the C167.

The protein belongs to the isochorismatase family. RutB subfamily.

The catalysed reaction is (Z)-3-ureidoacrylate + H2O + H(+) = (Z)-3-aminoacrylate + NH4(+) + CO2. It catalyses the reaction (Z)-3-ureidoacrylate + H2O = (Z)-3-aminoacrylate + carbamate + H(+). The enzyme catalyses (Z)-2-methylureidoacrylate + H2O + H(+) = (Z)-2-methylaminoacrylate + NH4(+) + CO2. Functionally, hydrolyzes ureidoacrylate to form aminoacrylate and carbamate. The carbamate hydrolyzes spontaneously, thereby releasing one of the nitrogen atoms of the pyrimidine ring as ammonia and one of its carbon atoms as CO2. This is Ureidoacrylate amidohydrolase RutB from Escherichia coli O157:H7 (strain EC4115 / EHEC).